Here is a 339-residue protein sequence, read N- to C-terminus: tRNA N6-adenosine threonylcarbamoyltransferase (339 aa).

Residues H115 and H119 each coordinate Fe cation. Residues 136-140, D168, E185, and S265 contribute to the substrate site; that span reads LISGG. Residue D293 coordinates Fe cation.

It belongs to the KAE1 / TsaD family. The cofactor is Fe(2+).

It localises to the cytoplasm. It carries out the reaction L-threonylcarbamoyladenylate + adenosine(37) in tRNA = N(6)-L-threonylcarbamoyladenosine(37) in tRNA + AMP + H(+). Its function is as follows. Required for the formation of a threonylcarbamoyl group on adenosine at position 37 (t(6)A37) in tRNAs that read codons beginning with adenine. Is probably involved in the transfer of the threonylcarbamoyl moiety of threonylcarbamoyl-AMP (TC-AMP) to the N6 group of A37. This chain is tRNA N6-adenosine threonylcarbamoyltransferase, found in Pyrobaculum calidifontis (strain DSM 21063 / JCM 11548 / VA1).